The sequence spans 1043 residues: Glutamate receptor ionotropic, NMDA 3B (1043 aa).

A signal peptide spans 1 to 22 (MEFVRALWLGLALALGPGSAGG). At 23–574 (HPQPCGVLAR…PIGAFMWPLH (552 aa)) the chain is on the extracellular side. Residues N69, N344, N451, and N465 are each glycosylated (N-linked (GlcNAc...) asparagine). Intrachain disulfides connect C439-C475 and C445-C476. Glycine contacts are provided by S531, S533, and R538. 2 residues coordinate D-serine: S533 and R538. A helical transmembrane segment spans residues 575–594 (WSTWLGVFAALHLTALFLTV). The Cytoplasmic segment spans residues 595–615 (YEWRSPYGLTPRGRNRSTVFS). The segment at residues 616–627 (YSSALNLCYAIL) is an intramembrane region (discontinuously helical). Residues 628–641 (FRRTVSSKTPKCPT) are Cytoplasmic-facing. Residues 642–661 (GRLLMNLWAIFCLLVLSSYT) traverse the membrane as a helical segment. Residues 662–832 (ANLAAVMVGD…TLQMSIYHFA (171 aa)) lie on the Extracellular side of the membrane. S701 contacts glycine. 3 residues coordinate D-serine: S701, A702, and D745. D745 is a glycine binding site. Residue N786 is glycosylated (N-linked (GlcNAc...) asparagine). Residues 833–848 (GLFVLLCLGLGSALLS) traverse the membrane as a helical segment. The Cytoplasmic portion of the chain corresponds to 849–1043 (SLGEHAFFRL…PHSGRPGSQE (195 aa)). 2 disordered regions span residues 882–924 (ALNT…WKRA) and 1012–1043 (GDSA…GSQE). The interval 979–1012 (QPGELQELERRIEVARERLRQALVRRGQLLAQLG) is involved in the trafficking and surface expression of NMDARs. Over residues 1024–1035 (QARAAPAEAPPH) the composition is skewed to low complexity.

It belongs to the glutamate-gated ion channel (TC 1.A.10.1) family. NR3B/GRIN3B subfamily. As to quaternary structure, forms heterotetrameric channels that contain at least two GluN1 subunits and at least a combination of one GluN2 and one GluN3 subunits (in vitro). Forms heterotetrameric channels composed of two GluN1/zeta subunits (GRIN1), and two identical GluN3 subunits (GRIN3A or GRIN3B) (in vitro). Does not form functional homomeric channels.

The protein localises to the cell membrane. It is found in the postsynaptic cell membrane. It catalyses the reaction Ca(2+)(in) = Ca(2+)(out). It carries out the reaction Na(+)(in) = Na(+)(out). In terms of biological role, component of a non-conventional N-methyl-D-aspartate (NMDA) receptors (NMDARs) that function as heterotetrameric, ligand-gated cation channels with low calcium permeability and low voltage-dependent block by Mg(2+). Forms glutamatergic receptor complexes with GluN1 and GluN2 subunits which are activated by glycine binding to the GluN1 and GluN3 subunits and L-glutamate binding to GluN2 subunits. Forms excitatory glycinergic receptor complexes with GluN1 alone which are activated by glycine binding to the GluN1 and GluN3 subunits. GluN3B subunit also binds D-serine and, in the absence of glycine, activates glycinergic receptor complexes, but with lower efficacy than glycine. Each GluN3 subunit confers differential attributes to channel properties, including activation, deactivation and desensitization kinetics, pH sensitivity, Ca2(+) permeability, and binding to allosteric modulators. In Homo sapiens (Human), this protein is Glutamate receptor ionotropic, NMDA 3B.